A 28-amino-acid chain; its full sequence is Putative fruR/shl operon leader peptide (28 aa).

In Escherichia coli O6:H1 (strain CFT073 / ATCC 700928 / UPEC), this protein is Putative fruR/shl operon leader peptide (fruL).